A 347-amino-acid chain; its full sequence is MASLGKVVLTLADIAAQLGGDVLGDSQTPISRVAPLATAGEGDITFLANPKFRSQLSACKASAVILRPDVAEEFPGPRIVTGNPYAYYARVATLLNPYQSGLSGVHASAVVESPVPDSVAIAPNVYIGKDVTLGENVVINAGCVIGDGVSIGAGTVLYANVTVYYGCSIGQQCIIHSGAVIGSDGFGFAPEGQSWIKIPQIGRVVIGNDVEIGANTTIDRGALEDTVIGDGCKLDNLVHIGHNCKIGNNSVLAGCTGVAGSTVFGEHCVVGGAGMISGHLNIAAGTTISGGTTVMKSILNPGVYTSVFPLDTHEEWLRNASHIRRLSKLAERVSELEKKLKEKDIEG.

Residue His242 is the Proton acceptor of the active site.

Belongs to the transferase hexapeptide repeat family. LpxD subfamily. Homotrimer.

It catalyses the reaction a UDP-3-O-[(3R)-3-hydroxyacyl]-alpha-D-glucosamine + a (3R)-hydroxyacyl-[ACP] = a UDP-2-N,3-O-bis[(3R)-3-hydroxyacyl]-alpha-D-glucosamine + holo-[ACP] + H(+). It functions in the pathway bacterial outer membrane biogenesis; LPS lipid A biosynthesis. In terms of biological role, catalyzes the N-acylation of UDP-3-O-acylglucosamine using 3-hydroxyacyl-ACP as the acyl donor. Is involved in the biosynthesis of lipid A, a phosphorylated glycolipid that anchors the lipopolysaccharide to the outer membrane of the cell. In Dechloromonas aromatica (strain RCB), this protein is UDP-3-O-acylglucosamine N-acyltransferase.